Reading from the N-terminus, the 240-residue chain is Putative N-acetylmannosamine-6-phosphate 2-epimerase (240 aa).

The protein belongs to the NanE family.

It catalyses the reaction an N-acyl-D-glucosamine 6-phosphate = an N-acyl-D-mannosamine 6-phosphate. Its pathway is amino-sugar metabolism; N-acetylneuraminate degradation; D-fructose 6-phosphate from N-acetylneuraminate: step 3/5. Converts N-acetylmannosamine-6-phosphate (ManNAc-6-P) to N-acetylglucosamine-6-phosphate (GlcNAc-6-P). This chain is Putative N-acetylmannosamine-6-phosphate 2-epimerase, found in Vibrio cholerae serotype O1 (strain ATCC 39541 / Classical Ogawa 395 / O395).